An 885-amino-acid chain; its full sequence is DNA mismatch repair protein MutS (885 aa).

ATP is bound at residue 626 to 633 (GPNMGGKS).

The protein belongs to the DNA mismatch repair MutS family.

Functionally, this protein is involved in the repair of mismatches in DNA. It is possible that it carries out the mismatch recognition step. This protein has a weak ATPase activity. In Burkholderia cenocepacia (strain HI2424), this protein is DNA mismatch repair protein MutS.